Reading from the N-terminus, the 2270-residue chain is Protein DOP1B (2270 aa).

3 disordered regions span residues Met548–Glu572, Leu697–Glu716, and Gln1084–Arg1145. A compositionally biased stretch (polar residues) spans Ala1095–Arg1145.

The protein belongs to the DOP1 family.

Its subcellular location is the golgi apparatus membrane. Its function is as follows. May be involved in protein traffic between late Golgi and early endosomes. In Xenopus laevis (African clawed frog), this protein is Protein DOP1B (dop1b).